We begin with the raw amino-acid sequence, 282 residues long: Phosphatidylglycerol--prolipoprotein diacylglyceryl transferase (282 aa).

Helical transmembrane passes span 23 to 43 (IGPL…LLGW), 71 to 91 (FIVW…IFFY), 106 to 126 (IWNG…AMII), and 132 to 152 (GIPI…GLFF). An a 1,2-diacyl-sn-glycero-3-phospho-(1'-sn-glycerol)-binding site is contributed by Arg-154. 3 helical membrane passes run 189 to 209 (LYEA…LVYG), 217 to 237 (GFIT…VEFF), and 252 to 272 (WLTM…WAML).

The protein belongs to the Lgt family.

The protein localises to the cell inner membrane. It catalyses the reaction L-cysteinyl-[prolipoprotein] + a 1,2-diacyl-sn-glycero-3-phospho-(1'-sn-glycerol) = an S-1,2-diacyl-sn-glyceryl-L-cysteinyl-[prolipoprotein] + sn-glycerol 1-phosphate + H(+). It participates in protein modification; lipoprotein biosynthesis (diacylglyceryl transfer). Its function is as follows. Catalyzes the transfer of the diacylglyceryl group from phosphatidylglycerol to the sulfhydryl group of the N-terminal cysteine of a prolipoprotein, the first step in the formation of mature lipoproteins. This Rhizobium leguminosarum bv. trifolii (strain WSM2304) protein is Phosphatidylglycerol--prolipoprotein diacylglyceryl transferase.